Reading from the N-terminus, the 738-residue chain is MLQGMPKRSGSISELHDPFSSPDVYYGPATDPRRQKQPNKYSRTRTMSIIENVSTFKSAGKQYNIRRRGSEDDSMLASSGHRKFYIKDVDKTLEELLESEDTDGNYQITIEDRGPKTLRVGTANSNGFRHVQIRGTYMLSNLLQELTIAKNFGRKQVILDEARLNEDPVNRLTRLITHQFWDSLTRRIDYNSIAAIAADTKVDTPGAKVPRIYVPHGCPEQYEYFIECSQLNPSLNLEVKYLPDVITPEHVQSLNESPGLLALAMESHRDPITGESTLVGFPYVVPGGRFNELYGWDSYLMALGLLDCNKVDIARGMVEHFIFEIEHYGKILNANRSYYLCRSQPPFLTDMALKVFEKFGGDQNPTAVDFLKRAFIAAIKEYKSVWMAEPRYDKTTGLSCYHPDGIGFPPETEPDHFDAICRKFAEKHNVTIPEFRCMYDAGEVHEPELDEFFLHDRAVRESGHDTSYRLENVCAYLATIDLNSLLYKYEKDIAYVVSKYFDDSITDYAGETTTSSHWEALADIRKQRITKYLWDEETGFFYDYNVHIGKRTSYDSATTFWAMWAGLATQEQANAMVEKALPRLEMLGGLVACTEESRGEITMNRPSRQWDYPYGWAPHQMLAWTGLDNYGFTGVARRLAYRWLFLMTKAFVDYNGIVVEKYDVTRGTDPHRVDAEYGNQGADFKGVATEGFGWVNSSYILGLKFMNTYAKRALANCTVPDIFFKHMKPEEKARYALI.

Positions 1-44 (MLQGMPKRSGSISELHDPFSSPDVYYGPATDPRRQKQPNKYSRT) are disordered. Substrate contacts are provided by residues Arg-289, 296-297 (WD), Asn-333, Arg-342, 342-344 (RSQ), and Gly-463. Residues Asp-465 and Glu-660 each act as proton donor/acceptor in the active site.

This sequence belongs to the glycosyl hydrolase 37 family.

It catalyses the reaction alpha,alpha-trehalose + H2O = alpha-D-glucose + beta-D-glucose. This is Probable trehalase (NTH2) from Eremothecium gossypii (strain ATCC 10895 / CBS 109.51 / FGSC 9923 / NRRL Y-1056) (Yeast).